Reading from the N-terminus, the 187-residue chain is MKIKPCKSQVFRLEPIIGSRKYINYFWSFSIFFGAFGFLIVGICSYLKKELFFFSAENIIFIPQGAVMCFYGIAGIFLSFYLWFTMILGVGSGFNEFNKNEGIVNIFRWGFPGQNRRIKICCLIKDIKSIRIYIRDGISPRSALYLKIRGMPDIPLDVIEDRFNLNEIEKRATELASFLRVPIEGLE.

Helical transmembrane passes span 23–43 (INYFWSFSIFFGAFGFLIVGI) and 70–90 (FYGIAGIFLSFYLWFTMILGV).

It belongs to the Ycf4 family.

The protein localises to the plastid. Its subcellular location is the chloroplast thylakoid membrane. Seems to be required for the assembly of the photosystem I complex. The sequence is that of Photosystem I assembly protein Ycf4 from Chara vulgaris (Common stonewort).